The following is a 104-amino-acid chain: Pyrimidine/purine nucleoside phosphorylase (104 aa).

The protein belongs to the nucleoside phosphorylase PpnP family.

The catalysed reaction is a purine D-ribonucleoside + phosphate = a purine nucleobase + alpha-D-ribose 1-phosphate. It carries out the reaction adenosine + phosphate = alpha-D-ribose 1-phosphate + adenine. It catalyses the reaction cytidine + phosphate = cytosine + alpha-D-ribose 1-phosphate. The enzyme catalyses guanosine + phosphate = alpha-D-ribose 1-phosphate + guanine. The catalysed reaction is inosine + phosphate = alpha-D-ribose 1-phosphate + hypoxanthine. It carries out the reaction thymidine + phosphate = 2-deoxy-alpha-D-ribose 1-phosphate + thymine. It catalyses the reaction uridine + phosphate = alpha-D-ribose 1-phosphate + uracil. The enzyme catalyses xanthosine + phosphate = alpha-D-ribose 1-phosphate + xanthine. Its function is as follows. Catalyzes the phosphorolysis of diverse nucleosides, yielding D-ribose 1-phosphate and the respective free bases. Can use uridine, adenosine, guanosine, cytidine, thymidine, inosine and xanthosine as substrates. Also catalyzes the reverse reactions. The chain is Pyrimidine/purine nucleoside phosphorylase from Geotalea uraniireducens (strain Rf4) (Geobacter uraniireducens).